Here is a 157-residue protein sequence, read N- to C-terminus: Transcription elongation factor GreA (157 aa).

The protein belongs to the GreA/GreB family.

Its function is as follows. Necessary for efficient RNA polymerase transcription elongation past template-encoded arresting sites. The arresting sites in DNA have the property of trapping a certain fraction of elongating RNA polymerases that pass through, resulting in locked ternary complexes. Cleavage of the nascent transcript by cleavage factors such as GreA or GreB allows the resumption of elongation from the new 3'terminus. GreA releases sequences of 2 to 3 nucleotides. The polypeptide is Transcription elongation factor GreA (Phenylobacterium zucineum (strain HLK1)).